Consider the following 144-residue polypeptide: tRNA-specific adenosine deaminase (144 aa).

The 116-residue stretch at 1 to 116 (MEQALKQAGI…SNLRYFNSSV (116 aa)) folds into the CMP/dCMP-type deaminase domain. H48 is a binding site for Zn(2+). E50 (proton donor) is an active-site residue. Residues C78 and C81 each contribute to the Zn(2+) site.

Belongs to the cytidine and deoxycytidylate deaminase family. In terms of assembly, homodimer. Zn(2+) serves as cofactor.

It carries out the reaction adenosine(34) in tRNA + H2O + H(+) = inosine(34) in tRNA + NH4(+). Functionally, catalyzes the deamination of adenosine to inosine at the wobble position 34 of tRNA(Arg2). This is tRNA-specific adenosine deaminase from Rickettsia felis (strain ATCC VR-1525 / URRWXCal2) (Rickettsia azadi).